A 443-amino-acid polypeptide reads, in one-letter code: Amino-acid acetyltransferase (443 aa).

The N-acetyltransferase domain maps to 296-443 (EQIRRATIND…RSKVLMADLG (148 aa)).

It belongs to the acetyltransferase family. ArgA subfamily. Homohexamer.

The protein resides in the cytoplasm. The catalysed reaction is L-glutamate + acetyl-CoA = N-acetyl-L-glutamate + CoA + H(+). It functions in the pathway amino-acid biosynthesis; L-arginine biosynthesis; N(2)-acetyl-L-ornithine from L-glutamate: step 1/4. The polypeptide is Amino-acid acetyltransferase (argA) (Salmonella typhi).